We begin with the raw amino-acid sequence, 900 residues long: Translation initiation factor IF-2 (900 aa).

Residues 80-95 (LEEQSRKTVEKEDQLR) are compositionally biased toward basic and acidic residues. Disordered regions lie at residues 80–106 (LEEQ…VPGR), 149–169 (AVEA…DSPV), and 221–268 (DEFD…VDEK). The span at 253-262 (GKKKGKKKKK) shows a compositional bias: basic residues. The region spanning 397–567 (TRPPVVTIMG…LTEAEVRELK (171 aa)) is the tr-type G domain. The tract at residues 406-413 (GHVDHGKT) is G1. 406 to 413 (GHVDHGKT) lines the GTP pocket. Residues 431–435 (GITQH) are G2. The segment at 453-456 (DTPG) is G3. GTP is bound by residues 453–457 (DTPGH) and 507–510 (NKID). Residues 507-510 (NKID) are G4. The segment at 543–545 (SAK) is G5.

Belongs to the TRAFAC class translation factor GTPase superfamily. Classic translation factor GTPase family. IF-2 subfamily.

Its subcellular location is the cytoplasm. Functionally, one of the essential components for the initiation of protein synthesis. Protects formylmethionyl-tRNA from spontaneous hydrolysis and promotes its binding to the 30S ribosomal subunits. Also involved in the hydrolysis of GTP during the formation of the 70S ribosomal complex. This is Translation initiation factor IF-2 from Chlorobium phaeovibrioides (strain DSM 265 / 1930) (Prosthecochloris vibrioformis (strain DSM 265)).